A 140-amino-acid polypeptide reads, in one-letter code: 3-hydroxyacyl-[acyl-carrier-protein] dehydratase FabZ (140 aa).

Residue histidine 47 is part of the active site.

Belongs to the thioester dehydratase family. FabZ subfamily.

It localises to the cytoplasm. The enzyme catalyses a (3R)-hydroxyacyl-[ACP] = a (2E)-enoyl-[ACP] + H2O. Functionally, involved in unsaturated fatty acids biosynthesis. Catalyzes the dehydration of short chain beta-hydroxyacyl-ACPs and long chain saturated and unsaturated beta-hydroxyacyl-ACPs. The polypeptide is 3-hydroxyacyl-[acyl-carrier-protein] dehydratase FabZ (Streptococcus uberis (strain ATCC BAA-854 / 0140J)).